The following is a 425-amino-acid chain: Cyclin-K (425 aa).

The tract at residues Gly-262–Leu-425 is disordered. A compositionally biased stretch (low complexity) spans Ala-366 to Ala-377. The segment covering Gly-379–Thr-399 has biased composition (pro residues).

This sequence belongs to the cyclin family.

It localises to the nucleus. Its function is as follows. Regulatory subunit of cyclin-dependent kinases that mediates activation of target kinases. Plays a role in transcriptional regulation via its role in regulating the phosphorylation of the C-terminal domain (CTD) of the large subunit of RNA polymerase II (POLR2A). This chain is Cyclin-K (ccnk), found in Danio rerio (Zebrafish).